We begin with the raw amino-acid sequence, 239 residues long: Large ribosomal subunit protein uL2 (239 aa).

Residues 200–239 are disordered; that stretch reads VNHPHGGKEHHIGRPSTVSRRAPPGRKVGHIAARRTGRRK. Positions 222 to 239 are enriched in basic residues; it reads PPGRKVGHIAARRTGRRK.

Belongs to the universal ribosomal protein uL2 family. Part of the 50S ribosomal subunit. Forms a bridge to the 30S subunit in the 70S ribosome.

One of the primary rRNA binding proteins. Required for association of the 30S and 50S subunits to form the 70S ribosome, for tRNA binding and peptide bond formation. It has been suggested to have peptidyltransferase activity; this is somewhat controversial. Makes several contacts with the 16S rRNA in the 70S ribosome. The chain is Large ribosomal subunit protein uL2 from Thermococcus kodakarensis (strain ATCC BAA-918 / JCM 12380 / KOD1) (Pyrococcus kodakaraensis (strain KOD1)).